A 1031-amino-acid chain; its full sequence is MFDSFMKRNQLALIMFRACSKLQYHGVNTSLSRHLFLAKRNLSISSACLEAKNSQKFPALDTFEPRHIGPSKTDQQYQLESLGYKDFDSFLKDVIPDSVRTPESQLMAFGSVNPNEKNPPVNYSESEFTTLANNVANQNKLIKSFIGMGYYNVKLPAAIQRNVLENPEWYTQYTPYQAEISQGRLESMMNYQTMIADLTGLSISNASLLDEGTAAGEAMVMLMANDKKKRKTFLVDKNIYPNTLSVLRTRASGFGIKIELDNITPELITKSAKHVFGIFVQYPAADGSIFDYGHLAATARSFNMHVVAATDLLALTILKSPGEWGADVAVGSTQRFGLPMGYGGPHAGFFACSEEFKRKIPGRLIGLSKDRLENPAYRLALQTREQHIRREKATSNICTAQALLANMSAFYAIYHGPNGLQEIANRIYASTSFLKSALESSGYKIVNKSHFFDTLTIEVESADKVLAKALDHGYNLRKVDDSHVGLSLDETVCDKDIQALFSIFNINKSVDQYYMEIATSEPNGNSASTVDNLSICSLPENFRRTTLYLQHPVFNRYHSETELMRYIHHLQSKDLSLAHAMTPLGSCTMKLNAVTEMMPITNPLFANIHPYVPEEQAKGYRHVIEDLQLMLTTITGFDAACFQPNSGAAGEYTGLSVIRAYQRSIGQGHRNICLIPVSAHGTNPASAAMAGFTVIPVKCLNNGYLDMQDLKEKASKHADKLAAFMVTYPSTFGIFEPDVKEALEVIHEHGGQVYFDGANMNAMVGLCKAGDIGADVCHLNLHKTFCIPHGGGGPGVGPICVKKHLADFLPSHPVVSCGGKNGITSVSSSPFGSAGILPISWAYMRMMGLAGLRDASKAALLNANYMAKRLSSHYKLVYTNKNNLCAHEFILDAREFKATAGVDATDIAKRLQDYSFHAPTLSWPIANTLMIEPTESESMYEMDRFCDALISIRQEIREIEEGLQPKDNNLLVNAPHPQKDIASEKWDRPYTRERAVYPVPLLKERKFWPSVARLDDAYGDKNLFCTCSPVV.

A mitochondrion-targeting transit peptide spans 1 to 49 (MFDSFMKRNQLALIMFRACSKLQYHGVNTSLSRHLFLAKRNLSISSACL). An N6-(pyridoxal phosphate)lysine modification is found at Lys-783.

This sequence belongs to the GcvP family. Pyridoxal 5'-phosphate serves as cofactor.

Its subcellular location is the mitochondrion. The enzyme catalyses N(6)-[(R)-lipoyl]-L-lysyl-[glycine-cleavage complex H protein] + glycine + H(+) = N(6)-[(R)-S(8)-aminomethyldihydrolipoyl]-L-lysyl-[glycine-cleavage complex H protein] + CO2. In terms of biological role, the glycine cleavage system catalyzes the degradation of glycine. The P protein binds the alpha-amino group of glycine through its pyridoxal phosphate cofactor; CO(2) is released and the remaining methylamine moiety is then transferred to the lipoamide cofactor of the H protein. The sequence is that of Putative glycine dehydrogenase (decarboxylating), mitochondrial (gcv2) from Schizosaccharomyces pombe (strain 972 / ATCC 24843) (Fission yeast).